Here is an 82-residue protein sequence, read N- to C-terminus: Diptericin-A (82 aa).

Disordered regions lie at residues 1–32 (DEKPKLILPTPAPPNLPQLVGGGGGNRKDGFG) and 45–69 (DNGGHSIGVSPGYSQHLPGPYGNSR). Phe82 carries the post-translational modification Phenylalanine amide.

This sequence belongs to the attacin/sarcotoxin-2 family.

The protein localises to the secreted. Its function is as follows. Antimicrobial peptide required to resist Gram-negative bacterial infections, regulated by Dredd. The protein is Diptericin-A of Protophormia terraenovae (Northern blowfly).